The following is a 289-amino-acid chain: Eukaryotic translation initiation factor 3 subunit G (289 aa).

Disordered stretches follow at residues 1-31 (MSRLANSAGDWADDEEFDEAASLPPQQVISN) and 151-199 (DTMA…GEKM). The region spanning 209-287 (ATLRVTNVSE…LILRVEFAKK (79 aa)) is the RRM domain.

The protein belongs to the eIF-3 subunit G family. Component of the eukaryotic translation initiation factor 3 (eIF-3) complex.

Its subcellular location is the cytoplasm. RNA-binding component of the eukaryotic translation initiation factor 3 (eIF-3) complex, which is involved in protein synthesis of a specialized repertoire of mRNAs and, together with other initiation factors, stimulates binding of mRNA and methionyl-tRNAi to the 40S ribosome. The eIF-3 complex specifically targets and initiates translation of a subset of mRNAs involved in cell proliferation. This subunit can bind 18S rRNA. The chain is Eukaryotic translation initiation factor 3 subunit G from Coccidioides immitis (strain RS) (Valley fever fungus).